Reading from the N-terminus, the 283-residue chain is Elongation factor Ts (283 aa).

Residues 80-83 form an involved in Mg(2+) ion dislocation from EF-Tu region; sequence TDFV.

It belongs to the EF-Ts family.

The protein resides in the cytoplasm. Its function is as follows. Associates with the EF-Tu.GDP complex and induces the exchange of GDP to GTP. It remains bound to the aminoacyl-tRNA.EF-Tu.GTP complex up to the GTP hydrolysis stage on the ribosome. In Shigella boydii serotype 18 (strain CDC 3083-94 / BS512), this protein is Elongation factor Ts.